We begin with the raw amino-acid sequence, 408 residues long: Innexin-12 (408 aa).

Residues 29–49 (TIGLVLASAFITGWSFVGSPI) traverse the membrane as a helical segment. N-linked (GlcNAc...) asparagine glycosylation is present at N99. The next 3 membrane-spanning stretches (helical) occupy residues 113–133 (QWVPFILALQAMLFYFPVVIW), 197–217 (VITSYLFMKALFLINVLFQFV), and 284–304 (IFVALWWWLCFLTVVTITNTI).

It belongs to the pannexin family.

The protein resides in the cell membrane. Its subcellular location is the cell junction. It is found in the gap junction. Structural component of the gap junctions. Plays a role in oocyte directional transit in the spermatheca during ovulation by facilitating the directional propagation of the calcium signal in the spermatheca. Plays a role in male tail tip morphogenesis. This is Innexin-12 from Caenorhabditis elegans.